The primary structure comprises 561 residues: Putative transport protein YbjL (561 aa).

Transmembrane regions (helical) follow at residues 8-28 (LLNG…LCLG), 32-52 (LGSI…LLGQ), 66-86 (FMLF…SIFF), 94-114 (MLAL…GKLF), and 158-178 (NLSL…IVGA). RCK C-terminal domains are found at residues 202–288 (LDTD…SFRN) and 292–373 (VFDR…RIGF). A run of 5 helical transmembrane segments spans residues 383 to 403 (LLAF…TFQF), 406 to 426 (FSFG…LGFM), 451 to 471 (VFMA…LGAI), 475 to 495 (MLVA…LFGA), and 540 to 560 (AIAN…WPGL).

Belongs to the AAE transporter (TC 2.A.81) family. YbjL subfamily.

It is found in the cell membrane. The polypeptide is Putative transport protein YbjL (Escherichia fergusonii (strain ATCC 35469 / DSM 13698 / CCUG 18766 / IAM 14443 / JCM 21226 / LMG 7866 / NBRC 102419 / NCTC 12128 / CDC 0568-73)).